The primary structure comprises 179 residues: Large ribosomal subunit protein uL5 (179 aa).

It belongs to the universal ribosomal protein uL5 family. Part of the 50S ribosomal subunit; part of the 5S rRNA/L5/L18/L25 subcomplex. Contacts the 5S rRNA and the P site tRNA. Forms a bridge to the 30S subunit in the 70S ribosome.

Its function is as follows. This is one of the proteins that bind and probably mediate the attachment of the 5S RNA into the large ribosomal subunit, where it forms part of the central protuberance. In the 70S ribosome it contacts protein S13 of the 30S subunit (bridge B1b), connecting the 2 subunits; this bridge is implicated in subunit movement. Contacts the P site tRNA; the 5S rRNA and some of its associated proteins might help stabilize positioning of ribosome-bound tRNAs. This is Large ribosomal subunit protein uL5 from Lysinibacillus sphaericus (strain C3-41).